We begin with the raw amino-acid sequence, 467 residues long: ATP synthase subunit beta (467 aa).

156-163 (GGAGVGKT) contacts ATP.

It belongs to the ATPase alpha/beta chains family. F-type ATPases have 2 components, CF(1) - the catalytic core - and CF(0) - the membrane proton channel. CF(1) has five subunits: alpha(3), beta(3), gamma(1), delta(1), epsilon(1). CF(0) has three main subunits: a(1), b(2) and c(9-12). The alpha and beta chains form an alternating ring which encloses part of the gamma chain. CF(1) is attached to CF(0) by a central stalk formed by the gamma and epsilon chains, while a peripheral stalk is formed by the delta and b chains.

It is found in the cell inner membrane. It catalyses the reaction ATP + H2O + 4 H(+)(in) = ADP + phosphate + 5 H(+)(out). Functionally, produces ATP from ADP in the presence of a proton gradient across the membrane. The catalytic sites are hosted primarily by the beta subunits. This is ATP synthase subunit beta from Cupriavidus metallidurans (strain ATCC 43123 / DSM 2839 / NBRC 102507 / CH34) (Ralstonia metallidurans).